The primary structure comprises 233 residues: tRNA (guanine-N(7)-)-methyltransferase (233 aa).

Residues 1–36 (MSEFDPNPPRRNFYGRRHGKTLRQSQKGYLSEDLGS) form a disordered region. S-adenosyl-L-methionine-binding residues include glutamate 68, glutamate 93, aspartate 120, and aspartate 142. The active site involves aspartate 142. Residues lysine 146, aspartate 178, and 211-214 (TRYE) each bind substrate.

The protein belongs to the class I-like SAM-binding methyltransferase superfamily. TrmB family.

It carries out the reaction guanosine(46) in tRNA + S-adenosyl-L-methionine = N(7)-methylguanosine(46) in tRNA + S-adenosyl-L-homocysteine. It participates in tRNA modification; N(7)-methylguanine-tRNA biosynthesis. Functionally, catalyzes the formation of N(7)-methylguanine at position 46 (m7G46) in tRNA. This chain is tRNA (guanine-N(7)-)-methyltransferase, found in Paracoccus denitrificans (strain Pd 1222).